Consider the following 182-residue polypeptide: UPF0397 protein SPG_0438 (182 aa).

5 helical membrane passes run 10 to 30 (VVAVGIGAALFVVIGMINIPT), 46 to 66 (LLSIIFGPIIGLLVGLIGHAI), 73 to 93 (YGLWWTWIIASGLFGLVVGLF), 109 to 129 (ILIFNLIQLLANALVWGVLAP), and 148 to 168 (IVAGIANGVSVAIAGTLLLLA).

Belongs to the UPF0397 family.

The protein resides in the cell membrane. The sequence is that of UPF0397 protein SPG_0438 from Streptococcus pneumoniae serotype 19F (strain G54).